Reading from the N-terminus, the 306-residue chain is MIRVEIYERLEAAAVAEVLELVEAGARADGLSALNEQTILNLRHGGAEAEPGAHLMIRDAEGTLVGYANLELDNDGVAAVEMLVHPTHRHNGHGEALLAALIKRATAAKCRALTIWAHGDHPTALLLADRHDFTRDRVLWQMRRHLTDADGDGEPAAGITIRSFVPGRDETRLLEVNNAAFADHPDQGGWTVRDIAMREREDWFDPEGLLLAERDVDGQVLGFHWTKVHGSGDSAIGEIYVLGVAPEAQGLKLGAALTTAGLRYLRGRGLDTVMLYVDESNVRAVRLYTGAGFTRWTTDVNYHKKL.

N-acetyltransferase domains follow at residues glutamate 5–alanine 157 and isoleucine 159–leucine 306. A 1D-myo-inositol 2-(L-cysteinylamino)-2-deoxy-alpha-D-glucopyranoside-binding site is contributed by glutamate 36. An acetyl-CoA-binding site is contributed by methionine 82–valine 84. 3 residues coordinate 1D-myo-inositol 2-(L-cysteinylamino)-2-deoxy-alpha-D-glucopyranoside: aspartate 186, lysine 227, and glutamate 238. Leucine 242–valine 244 provides a ligand contact to acetyl-CoA. Tyrosine 276 is a 1D-myo-inositol 2-(L-cysteinylamino)-2-deoxy-alpha-D-glucopyranoside binding site. An acetyl-CoA-binding site is contributed by asparagine 281–arginine 286.

It belongs to the acetyltransferase family. MshD subfamily. In terms of assembly, monomer.

The enzyme catalyses 1D-myo-inositol 2-(L-cysteinylamino)-2-deoxy-alpha-D-glucopyranoside + acetyl-CoA = mycothiol + CoA + H(+). In terms of biological role, catalyzes the transfer of acetyl from acetyl-CoA to desacetylmycothiol (Cys-GlcN-Ins) to form mycothiol. In Stackebrandtia nassauensis (strain DSM 44728 / CIP 108903 / NRRL B-16338 / NBRC 102104 / LLR-40K-21), this protein is Mycothiol acetyltransferase.